A 285-amino-acid chain; its full sequence is Nucleotide-binding protein Psyr_4150 (285 aa).

An ATP-binding site is contributed by 8-15 (GRSGSGKS). Residue 60–63 (DARN) participates in GTP binding.

The protein belongs to the RapZ-like family.

In terms of biological role, displays ATPase and GTPase activities. The polypeptide is Nucleotide-binding protein Psyr_4150 (Pseudomonas syringae pv. syringae (strain B728a)).